The following is a 367-amino-acid chain: MYPESTTGSPARLSLRQTGSPGMIYSTRYGSPKRQLQFYRNLGKSGLRVSCLGLGTWVTFGGQITDEMAEQLMTLAYDNGINLFDTAEVYAAGKAEVVLGNIIKKKGWRRSSLVITTKIFWGGKAETERGLSRKHIIEGLKASLERLQLEYVDVVFANRPDPNTPMEETVRAMTHVINQGMAMYWGTSRWSSMEIMEAYSVARQFNLIPPICEQAEYHMFQREKVEVQLPELFHKIGVGAMTWSPLACGIVSGKYDSGIPPYSRASLKGYQWLKDKILSEEGRRQQAKLKELQAIAERLGCTLPQLAIAWCLRNEGVSSVLLGASSADQLMENIGAIQVLPKLSSSIIHEIDSILGNKPYSKKDYRS.

A phosphoserine mark is found at S9, S14, and S20. R28 carries the asymmetric dimethylarginine; alternate modification. At R28 the chain carries Omega-N-methylarginine; alternate. Position 31 is a phosphoserine (S31). The NADP(+) site is built by T56, W57, Q63, and D85. Y90 serves as the catalytic Proton donor/acceptor. S112 carries the post-translational modification Phosphoserine. K124 is subject to N6-acetyllysine. The NADP(+) site is built by N158, S188, R189, Q214, W243, S244, P245, L246, A247, C248, K254, Y262, R264, G323, S325, Q329, E332, and N333.

Belongs to the shaker potassium channel beta subunit family. As to quaternary structure, homotetramer. Interaction with tetrameric potassium channel alpha subunits gives rise to a heterooctamer. Identified in potassium channel complexes containing KCNA1, KCNA2, KCNA4, KCNA5, KCNA6, KCNAB1, KCNAB2 and KCND3. Interacts (in unphosphorylated form) with MAPRE1. Forms a ternary complex with SQSTM1 and PRKCZ. Phosphorylated by PRKCZ; may be regulated by incorporation in a complex composed of PRKCZ and SQSTM1. Detected in the juxtaparanodal region of nodes of Ranvier in myelinated nerve fibers in the spinal cord (at protein level).

It is found in the cytoplasm. The protein resides in the membrane. It localises to the cell membrane. The protein localises to the cell projection. Its subcellular location is the axon. It is found in the synapse. The protein resides in the synaptosome. It localises to the cytoskeleton. The enzyme catalyses hydroxyacetone + NADP(+) = methylglyoxal + NADPH + H(+). The catalysed reaction is (E)-4-oxonon-2-en-1-ol + NADP(+) = (E)-4-oxonon-2-enal + NADPH + H(+). Regulatory subunit of the voltage-gated potassium (Kv) Shaker channels composed of pore-forming and potassium-conducting alpha subunits and of regulatory beta subunits. The beta-2/KCNAB2 cytoplasmic subunit promotes potassium channel closure via a mechanism that does not involve physical obstruction of the channel pore. Promotes the inactivation of Kv1.4/KCNA4 and Kv1.5/KCNA5 alpha subunit-containing channels. Displays nicotinamide adenine dinucleotide phosphate (NADPH)-dependent aldoketoreductase activity by catalyzing the NADPH-dependent reduction of a wide range of aldehyde and ketone substrates. Substrate specificity includes methylglyoxal, 9,10-phenanthrenequinone, prostaglandin J2, 4-nitrobenzaldehyde, 4-nitroacetophenone and 4-oxo-trans-2-nonenal (in vitro, no physiological substrate identified yet). The binding of oxidized and reduced nucleotide alters Kv channel gating and may contribute to dynamic fine tuning of cell excitability. Contributes to the regulation of nerve signaling, and prevents neuronal hyperexcitability. This chain is Voltage-gated potassium channel subunit beta-2 (KCNAB2), found in Bos taurus (Bovine).